Consider the following 235-residue polypeptide: Uridylate kinase (235 aa).

8–11 (KLSG) provides a ligand contact to ATP. Gly49 is a UMP binding site. Gly50 and Arg54 together coordinate ATP. 131–138 (TGNPYFST) provides a ligand contact to UMP. Residues Asn159, Tyr165, and Asp168 each coordinate ATP.

Belongs to the UMP kinase family. As to quaternary structure, homohexamer.

Its subcellular location is the cytoplasm. It catalyses the reaction UMP + ATP = UDP + ADP. The protein operates within pyrimidine metabolism; CTP biosynthesis via de novo pathway; UDP from UMP (UMPK route): step 1/1. Its activity is regulated as follows. Inhibited by UTP. Functionally, catalyzes the reversible phosphorylation of UMP to UDP. This Mycoplasma pneumoniae (strain ATCC 29342 / M129 / Subtype 1) (Mycoplasmoides pneumoniae) protein is Uridylate kinase.